The chain runs to 309 residues: GTP cyclohydrolase MptA 2 (309 aa).

It belongs to the GTP cyclohydrolase IV family. In terms of assembly, homodimer. Fe(2+) serves as cofactor.

It catalyses the reaction GTP + H2O = 7,8-dihydroneopterin 2',3'-cyclic phosphate + formate + diphosphate + H(+). Its pathway is cofactor biosynthesis; 5,6,7,8-tetrahydromethanopterin biosynthesis. In terms of biological role, converts GTP to 7,8-dihydro-D-neopterin 2',3'-cyclic phosphate, the first intermediate in the biosynthesis of coenzyme methanopterin. The sequence is that of GTP cyclohydrolase MptA 2 from Methanocella arvoryzae (strain DSM 22066 / NBRC 105507 / MRE50).